The following is a 154-amino-acid chain: CASP-like protein 5B2 (154 aa).

The Cytoplasmic portion of the chain corresponds to 1-17 (MAGLAGRPGSWGGLVLR). A helical membrane pass occupies residues 18-38 (VGQALFAAACIGVMGSSLGFA). Topologically, residues 39–42 (SYTA) are extracellular. A helical transmembrane segment spans residues 43–63 (FCYLIASMGLQMLWSFGLACL). Over 64–87 (DGYAIRANKDLTSPILLSLFVVGD) the chain is Cytoplasmic. Residues 88–107 (WVTAILSFAASSSAAGVVIL) traverse the membrane as a helical segment. Residues 108-130 (FQKDVLFCRRYPQLPCGKYELAT) are Extracellular-facing. The chain crosses the membrane as a helical span at residues 131–151 (AFAFLSWALSATSALIMFWLL). Topologically, residues 152–154 (AAF) are cytoplasmic.

Belongs to the Casparian strip membrane proteins (CASP) family. In terms of assembly, homodimer and heterodimers.

It localises to the cell membrane. This Zea mays (Maize) protein is CASP-like protein 5B2.